We begin with the raw amino-acid sequence, 173 residues long: MVTAASEMELFLPKSYDIFWSLVILIIVAVFFYKFFLPKFQAVFDERAAKIEGGIAKAEQAQKDADEAKAKYDAQLSNARVEASKIRDDARAEASHIIADARTRAEADAAQITATAQRSIESQQQQALVSLKGEVGVLATALAGKILGSKLESDDVQSTMIDQMIAELDSDKK.

The chain crosses the membrane as a helical span at residues 18-38 (IFWSLVILIIVAVFFYKFFLP).

The protein belongs to the ATPase B chain family. As to quaternary structure, F-type ATPases have 2 components, F(1) - the catalytic core - and F(0) - the membrane proton channel. F(1) has five subunits: alpha(3), beta(3), gamma(1), delta(1), epsilon(1). F(0) has three main subunits: a(1), b(2) and c(10-14). The alpha and beta chains form an alternating ring which encloses part of the gamma chain. F(1) is attached to F(0) by a central stalk formed by the gamma and epsilon chains, while a peripheral stalk is formed by the delta and b chains.

It localises to the cell membrane. In terms of biological role, f(1)F(0) ATP synthase produces ATP from ADP in the presence of a proton or sodium gradient. F-type ATPases consist of two structural domains, F(1) containing the extramembraneous catalytic core and F(0) containing the membrane proton channel, linked together by a central stalk and a peripheral stalk. During catalysis, ATP synthesis in the catalytic domain of F(1) is coupled via a rotary mechanism of the central stalk subunits to proton translocation. Functionally, component of the F(0) channel, it forms part of the peripheral stalk, linking F(1) to F(0). This is ATP synthase subunit b from Bifidobacterium adolescentis (strain ATCC 15703 / DSM 20083 / NCTC 11814 / E194a).